A 61-amino-acid chain; its full sequence is Metallothionein-1F (61 aa).

Position 1 is an N-acetylmethionine (M1). The interval 1–29 (MDPNCSCAAGVSCTCAGSCKCKECKCTSC) is beta. The a divalent metal cation site is built by C5, C7, C13, C15, C19, C21, C24, C26, C29, C33, C34, C36, C37, C41, C44, C48, C50, and C57. The alpha stretch occupies residues 30–61 (KKSCCSCCPVGCSKCAQGCVCKGASEKCSCCD). S58 carries the post-translational modification Phosphoserine. Residues C59 and C60 each contribute to the a divalent metal cation site.

The protein belongs to the metallothionein superfamily. Type 1 family. As to quaternary structure, monomer.

Its function is as follows. Metallothioneins have a high content of cysteine residues that bind various heavy metals; these proteins are transcriptionally regulated by both heavy metals and glucocorticoids. The polypeptide is Metallothionein-1F (MT1F) (Homo sapiens (Human)).